The chain runs to 131 residues: MSGGKGKAGSSEKASTSRSAKAGLTFPVGRVHRLLRKGNYAQRVGSGAPVYLTSVLEYLAAEILELAGNAARDNKKSRIIPRHLQLAIRNDEELNKLLGHVTIAQGGVLPNIHQSLLPAKKAKPGKASQEL.

Residues 1–22 (MSGGKGKAGSSEKASTSRSAKA) form a disordered region. S2 carries the post-translational modification N-acetylserine. N6-acetyllysine is present on residues K5 and K7. Q105 is subject to N5-methylglutamine. K126 is covalently cross-linked (Glycyl lysine isopeptide (Lys-Gly) (interchain with G-Cter in SUMO)). S128 is subject to Phosphoserine. The short motif at 128-129 (SQ) is the [ST]-Q motif element.

Belongs to the histone H2A family. The nucleosome is a histone octamer containing two molecules each of H2A, H2B, H3 and H4 assembled in one H3-H4 heterotetramer and two H2A-H2B heterodimers. The octamer wraps approximately 147 bp of DNA. Post-translationally, phosphorylated to form H2AS128ph (gamma-H2A) in response to DNA double-strand breaks (DSBs) generated by exogenous genotoxic agents and by stalled replication forks. Phosphorylation is dependent on the DNA damage checkpoint kinases MEC1/ATR and TEL1/ATM, spreads on either side of a detected DSB site and may mark the surrounding chromatin for recruitment of proteins required for DNA damage signaling and repair. Gamma-H2A is removed from the DNA prior to the strand invasion-primer extension step of the repair process and subsequently dephosphorylated. Dephosphorylation is necessary for efficient recovery from the DNA damage checkpoint. Acetylated by ESA1 to form H2AK4ac and H2AK7ac.

Its subcellular location is the nucleus. It localises to the chromosome. Functionally, core component of nucleosome which plays a central role in DNA double strand break (DSB) repair. Nucleosomes wrap and compact DNA into chromatin, limiting DNA accessibility to the cellular machineries which require DNA as a template. Histones thereby play a central role in transcription regulation, DNA repair, DNA replication and chromosomal stability. DNA accessibility is regulated via a complex set of post-translational modifications of histones, also called histone code, and nucleosome remodeling. The chain is Histone H2A.2 (HTA2) from Scheffersomyces stipitis (strain ATCC 58785 / CBS 6054 / NBRC 10063 / NRRL Y-11545) (Yeast).